A 407-amino-acid chain; its full sequence is Tyrosine--tRNA ligase (407 aa).

Residues 47–56 (PTAPDLHLGA) carry the 'HIGH' region motif. The short motif at 231–235 (KMSKS) is the 'KMSKS' region element. Lys-234 provides a ligand contact to ATP. The region spanning 342–403 (PRLSQLLVQV…GKRHFARVAL (62 aa)) is the S4 RNA-binding domain.

Belongs to the class-I aminoacyl-tRNA synthetase family. TyrS type 2 subfamily. Homodimer.

It is found in the cytoplasm. The enzyme catalyses tRNA(Tyr) + L-tyrosine + ATP = L-tyrosyl-tRNA(Tyr) + AMP + diphosphate + H(+). In terms of biological role, catalyzes the attachment of tyrosine to tRNA(Tyr) in a two-step reaction: tyrosine is first activated by ATP to form Tyr-AMP and then transferred to the acceptor end of tRNA(Tyr). The polypeptide is Tyrosine--tRNA ligase (Acidithiobacillus ferrooxidans (Thiobacillus ferrooxidans)).